A 102-amino-acid chain; its full sequence is Small ribosomal subunit protein uS10 (102 aa).

It belongs to the universal ribosomal protein uS10 family. Part of the 30S ribosomal subunit.

In terms of biological role, involved in the binding of tRNA to the ribosomes. The polypeptide is Small ribosomal subunit protein uS10 (Methanosphaera stadtmanae (strain ATCC 43021 / DSM 3091 / JCM 11832 / MCB-3)).